Consider the following 399-residue polypeptide: MVCLKTLSVFLAAFAAADARAVFKTQGHKNSEMIPDNYIVVMKDGVSQDDFKAHISSVSSIHSTNKAKRGTNTEGMKREFDIMNWRGYHGHFDRDTLEEILNDSKVDYVEQDQVVRISGLVTQRSAPSWGLGRVSHRQAGSRDYVFDDSAGRGVTIYGVDTGIDINHQDFRGRARWGTNTADRDNADRHGHGTHTASTFAGTAYGIAKNANIVAVKVLGSDGSGSTSGIIAGINYCVQDAQQRGILGKAAMNLSLGGGFSQANNDAVTRAQNAGIFVAVAAGNDNKDARNYSPASAPAVCTVASSTINDSKSSFSNWGPVVDIYAPGSDIIAARPGGGSTTMSGTSMASPHVAGMGAYMIGMGANPRQVCDRLKQLATAAIRNPGFSTTNRLLYNGSGQ.

A signal peptide spans methionine 1 to alanine 19. The propeptide occupies arginine 20–serine 118. The Inhibitor I9 domain occupies tyrosine 38–isoleucine 117. N-linked (GlcNAc...) asparagine glycosylation is present at asparagine 102. The 272-residue stretch at serine 128–glutamine 399 folds into the Peptidase S8 domain. Catalysis depends on charge relay system residues aspartate 160 and histidine 191. Asparagine 252 and asparagine 308 each carry an N-linked (GlcNAc...) asparagine glycan. Catalysis depends on serine 346, which acts as the Charge relay system. Asparagine 395 carries an N-linked (GlcNAc...) asparagine glycan.

The protein belongs to the peptidase S8 family.

Its subcellular location is the secreted. In terms of biological role, secreted subtilisin-like serine protease with keratinolytic activity that contributes to pathogenicity. This is Subtilisin-like protease 4 (SUB4) from Trichophyton rubrum (Athlete's foot fungus).